The primary structure comprises 294 residues: 33 kDa chaperonin (294 aa).

Disulfide bonds link cysteine 231–cysteine 233 and cysteine 264–cysteine 267.

This sequence belongs to the HSP33 family. Under oxidizing conditions two disulfide bonds are formed involving the reactive cysteines. Under reducing conditions zinc is bound to the reactive cysteines and the protein is inactive.

The protein resides in the cytoplasm. In terms of biological role, redox regulated molecular chaperone. Protects both thermally unfolding and oxidatively damaged proteins from irreversible aggregation. Plays an important role in the bacterial defense system toward oxidative stress. This chain is 33 kDa chaperonin, found in Aeromonas salmonicida (strain A449).